The chain runs to 785 residues: MSCSCLCMSLYRGADRIGRFYTAHCPQDMALCMHRQKLNPLALALAAAFALNAPAALADDEEPPIAVPAPPKEPGQTVVHADDMDGEMSVILHAKGNVVATRDDQRVESDWLDYYQTKNRVKAGDRFRMTRGGDVITGTTLDYNVDTYSGTGMDPVFSMARQNQTAVKPAPGAPPAKPVTLRGDGSQVDFQGQNQYRVYGSRMTTCDPGDEAWYLKSSRTDLDYNTGVGVAHNAWMQFYGVPILYSPWLDFPLNSNRKSGFLMPTFKTGSSGTEFSLPYYWNIAPNYDATITPHINVKHGNMLAGEFRYLQPDYSGRIYTEQLPKDKLTGESRYAWSASHSQNFGHGLSFGMDFNQVSDNNYFTDFGDQVAIASNVNLNREAWLNYALGWQGGGGNVTLRAQRYQNLTINPVPGDIPYAKMPQLTFNANQSLPSGFSANLISDLTRFDHPSLQNAERLVLYPSVSWNFDRSWGFLRPKLGVNYTHYNLDAFQGSPSHVQTRTLPIFSTDAGLYFDRDTQFLGRDHLMTLEPRLFYVNIPNNRDQNSLPMFDTSVNDINFAQLFTENRYSGYDRINGANQITTALTSRFIDQSNGLERLRLAVGKRFYLKDDVTQTVNQPSSDLLLSAGGDLTREWRFDSSYQYNQQLGMTERYNAQLRYNPAAGKIASVRYRFGRYEQLDNSNNYGPMRQVDVAAQWPIARRWYAIGRYNYSFIERKPIERLAGFEYNDGCWSLRMYSQRYVTDPTTTKNAWFFQLELKGLGALGNNGVQDTLRLAVPGYTKINE.

Residues M1 to A58 form the signal peptide.

This sequence belongs to the LptD family. In terms of assembly, component of the lipopolysaccharide transport and assembly complex. Interacts with LptE and LptA.

The protein localises to the cell outer membrane. In terms of biological role, together with LptE, is involved in the assembly of lipopolysaccharide (LPS) at the surface of the outer membrane. In Chromobacterium violaceum (strain ATCC 12472 / DSM 30191 / JCM 1249 / CCUG 213 / NBRC 12614 / NCIMB 9131 / NCTC 9757 / MK), this protein is LPS-assembly protein LptD.